A 453-amino-acid polypeptide reads, in one-letter code: Elongation factor 1-alpha (453 aa).

The tr-type G domain maps to 5–230; it reads KTHINIVVIG…DAIVEPKRPH (226 aa). The G1 stretch occupies residues 14–21; sequence GHVDAGKS. 14-21 provides a ligand contact to GTP; the sequence is GHVDAGKS. A G2 region spans residues 70–74; that stretch reads GITID. Residues 91 to 94 form a G3 region; sequence DAPG. GTP is bound by residues 91–95 and 153–156; these read DAPGH and NKMD. Residues 153-156 are G4; sequence NKMD. A G5 region spans residues 194–196; it reads SGW.

Belongs to the TRAFAC class translation factor GTPase superfamily. Classic translation factor GTPase family. EF-Tu/EF-1A subfamily. Binds to actin.

The protein localises to the cytoplasm. Functionally, this protein promotes the GTP-dependent binding of aminoacyl-tRNA to the A-site of ribosomes during protein biosynthesis. It is also an abundant actin filament bundling protein. In Dictyostelium discoideum (Social amoeba), this protein is Elongation factor 1-alpha (eef1a2).